The primary structure comprises 154 residues: 6,7-dimethyl-8-ribityllumazine synthase (154 aa).

Residues Phe15, 47-49, and 71-73 each bind 5-amino-6-(D-ribitylamino)uracil; these read TFD and AVI. Residue 76-77 participates in (2S)-2-hydroxy-3-oxobutyl phosphate binding; the sequence is ET. Catalysis depends on His79, which acts as the Proton donor. 5-amino-6-(D-ribitylamino)uracil is bound at residue Leu104. Arg119 contacts (2S)-2-hydroxy-3-oxobutyl phosphate.

Belongs to the DMRL synthase family.

The catalysed reaction is (2S)-2-hydroxy-3-oxobutyl phosphate + 5-amino-6-(D-ribitylamino)uracil = 6,7-dimethyl-8-(1-D-ribityl)lumazine + phosphate + 2 H2O + H(+). The protein operates within cofactor biosynthesis; riboflavin biosynthesis; riboflavin from 2-hydroxy-3-oxobutyl phosphate and 5-amino-6-(D-ribitylamino)uracil: step 1/2. In terms of biological role, catalyzes the formation of 6,7-dimethyl-8-ribityllumazine by condensation of 5-amino-6-(D-ribitylamino)uracil with 3,4-dihydroxy-2-butanone 4-phosphate. This is the penultimate step in the biosynthesis of riboflavin. In Saccharolobus islandicus (strain L.S.2.15 / Lassen #1) (Sulfolobus islandicus), this protein is 6,7-dimethyl-8-ribityllumazine synthase.